The sequence spans 487 residues: NGFI-A-binding protein 1 (487 aa).

Residues 4–82 form an NCD1 region; sequence ALPRTLGELQ…RDWVTNPGLF (79 aa). Residues K126, K129, and K143 each participate in a glycyl lysine isopeptide (Lys-Gly) (interchain with G-Cter in SUMO2) cross-link. The tract at residues 162–188 is disordered; that stretch reads QGHHATESEHSLSPADLGSPASPKESS. 2 positions are modified to phosphoserine: S172 and S183. K212 participates in a covalent cross-link: Glycyl lysine isopeptide (Lys-Gly) (interchain with G-Cter in SUMO2). Residues 221-310 form an NCD2 region; sequence LLKTNKKLAK…ARQISREVTY (90 aa). Residues 307–338 form a necessary for nuclear localization region; the sequence is EVTYKYTYRTTKSKCGERDELSPKRIKVEDGF. S328 is modified (phosphoserine). Residue K333 forms a Glycyl lysine isopeptide (Lys-Gly) (interchain with G-Cter in SUMO1); alternate linkage. Residue K333 forms a Glycyl lysine isopeptide (Lys-Gly) (interchain with G-Cter in SUMO2); alternate linkage. Residues K355, K369, and K373 each participate in a glycyl lysine isopeptide (Lys-Gly) (interchain with G-Cter in SUMO2) cross-link. The disordered stretch occupies residues 399-434; the sequence is YRQSSEEHSPNGLTSDNSDGQGERPLNLRMPNLQNR. Position 407 is a phosphoserine (S407). The segment covering 409–418 has biased composition (polar residues); that stretch reads NGLTSDNSDG. Residues K454, K465, and K477 each participate in a glycyl lysine isopeptide (Lys-Gly) (interchain with G-Cter in SUMO2) cross-link. K480 participates in a covalent cross-link: Glycyl lysine isopeptide (Lys-Gly) (interchain with G-Cter in SUMO1); alternate. Residue K480 forms a Glycyl lysine isopeptide (Lys-Gly) (interchain with G-Cter in SUMO2); alternate linkage.

It belongs to the NAB family. In terms of assembly, homomultimers may associate with EGR1 bound to DNA. As to expression, isoform Short is found in myeloid leukemia cell line KG-1.

The protein resides in the nucleus. In terms of biological role, acts as a transcriptional repressor for zinc finger transcription factors EGR1 and EGR2. The protein is NGFI-A-binding protein 1 (NAB1) of Homo sapiens (Human).